Reading from the N-terminus, the 177-residue chain is Large ribosomal subunit protein uL6 (177 aa).

This sequence belongs to the universal ribosomal protein uL6 family. In terms of assembly, part of the 50S ribosomal subunit.

In terms of biological role, this protein binds to the 23S rRNA, and is important in its secondary structure. It is located near the subunit interface in the base of the L7/L12 stalk, and near the tRNA binding site of the peptidyltransferase center. This is Large ribosomal subunit protein uL6 from Bartonella henselae (strain ATCC 49882 / DSM 28221 / CCUG 30454 / Houston 1) (Rochalimaea henselae).